Reading from the N-terminus, the 21-residue chain is Outer membrane protein P2 (21 aa).

As to quaternary structure, disulfide bond interactions within and between MOMP molecules and other components form high molecular-weight oligomers.

It localises to the cell outer membrane. Structural rigidity of the outer membrane of elementary bodies and porin forming, permitting diffusion of solutes through the intracellular reticulate body membrane. Binds carcinoembryonic antigen (CEA). The sequence is that of Outer membrane protein P2 from Glaesserella parasuis (Haemophilus parasuis).